Here is a 749-residue protein sequence, read N- to C-terminus: Phosphate-regulating neutral endopeptidase PHEX (749 aa).

Residues 1–20 lie on the Cytoplasmic side of the membrane; that stretch reads MEAETGSTMETGKGTNRGIR. A helical; Signal-anchor for type II membrane protein transmembrane segment spans residues 21–37; that stretch reads IALALFIGGTLVLGTLL. Over 38–749 the chain is Extracellular; sequence FLVSQGLLSF…NRGADSCRLW (712 aa). One can recognise a Peptidase M13 domain in the interval 53–749; sequence YCLKPECIEA…NRGADSCRLW (697 aa). An intrachain disulfide couples C54 to C59. N-linked (GlcNAc...) asparagine glycosylation is found at N71, N238, N263, N290, N301, N377, and N484. Disulfide bonds link C77–C733, C85–C693, C142–C406, and C617–C746. Zn(2+) is bound at residue H580. The active site involves E581. Positions 584 and 642 each coordinate Zn(2+). The active-site Proton donor is D646. N-linked (GlcNAc...) asparagine glycosylation occurs at N736.

The protein belongs to the peptidase M13 family. Interacts with MEPE; the interaction is zinc-dependent (via ASARM motif). Zn(2+) is required as a cofactor. In terms of processing, N-glycosylated. Expressed in bone, specifically in the osteoid and in osteocytes. Expressed in teeth, specifically in odontoblasts and ameloblasts. Expressed moderately by macrophages in the liver and has minimal expression in brown adipose tissue. Also expressed in suprabasal layers of the skin.

The protein resides in the cell membrane. Peptidase that cleaves SIBLING (small integrin-binding ligand, N-linked glycoprotein)-derived ASARM peptides, thus regulating their biological activity. Cleaves ASARM peptides between Ser and Glu or Asp residues. Regulates osteogenic cell differentiation and bone mineralization through the cleavage of the MEPE-derived ASARM peptide. Promotes dentin mineralization and renal phosphate reabsorption by cleaving DMP1- and MEPE-derived ASARM peptides. Inhibits the cleavage of MEPE by CTSB/cathepsin B thus preventing MEPE degradation. The protein is Phosphate-regulating neutral endopeptidase PHEX (Phex) of Mus musculus (Mouse).